Consider the following 503-residue polypeptide: Type II secretion system ATPase E (503 aa).

Zn(2+)-binding residues include cysteine 397, cysteine 400, cysteine 430, and cysteine 433.

This sequence belongs to the GSP E family. Forms homooligomers; most probably hexamers. Interacts with EpsL/GspL. Requires Zn(2+) as cofactor.

It localises to the cell inner membrane. The catalysed reaction is ATP + H2O + cellular proteinSide 1 = ADP + phosphate + cellular proteinSide 2.. ATPase component of the type II secretion system required for the energy-dependent secretion of extracellular factors such as proteases and toxins from the periplasm. Acts as a molecular motor to provide the energy that is required for assembly of the pseudopilus and the extrusion of substrates generated in the cytoplasm. In Vibrio cholerae serotype O1 (strain ATCC 39315 / El Tor Inaba N16961), this protein is Type II secretion system ATPase E (epsE).